The sequence spans 204 residues: Ubiquitin-conjugating enzyme E2 T (204 aa).

Residues 2-152 (QRASRLKKEL…AKQWTEAHAR (151 aa)) form the UBC core domain. Cysteine 86 (glycyl thioester intermediate) is an active-site residue. Residues lysine 91 and lysine 181 each participate in a glycyl lysine isopeptide (Lys-Gly) (interchain with G-Cter in ubiquitin) cross-link. The tract at residues 150-204 (HARQKQKADEEELGTSSEVGDSEESHSTQKRKARPLGGMEKKFSPDVQRVYPGPS) is disordered. Glycyl lysine isopeptide (Lys-Gly) (interchain with G-Cter in SUMO2) cross-links involve residues lysine 190 and lysine 191. Serine 193 bears the Phosphoserine mark.

The protein belongs to the ubiquitin-conjugating enzyme family. As to quaternary structure, interacts with FANCL and BRCA1. Auto-ubiquitinated. Effects of auto-monoubiquitination at Lys-91 and Lys-181 are unclear.

It is found in the nucleus. It carries out the reaction S-ubiquitinyl-[E1 ubiquitin-activating enzyme]-L-cysteine + [E2 ubiquitin-conjugating enzyme]-L-cysteine = [E1 ubiquitin-activating enzyme]-L-cysteine + S-ubiquitinyl-[E2 ubiquitin-conjugating enzyme]-L-cysteine.. It functions in the pathway protein modification; protein ubiquitination. Accepts ubiquitin from the E1 complex and catalyzes its covalent attachment to other proteins. Catalyzes monoubiquitination. Involved in mitomycin-C (MMC)-induced DNA repair: acts as a specific E2 ubiquitin-conjugating enzyme for the Fanconi anemia complex by associating with E3 ubiquitin-protein ligase FANCL and catalyzing monoubiquitination of FANCD2, a key step in the DNA damage pathway. Also mediates monoubiquitination of FANCL and FANCI. May contribute to ubiquitination and degradation of BRCA1. In vitro able to promote polyubiquitination using all 7 ubiquitin Lys residues, but may prefer 'Lys-11'-, 'Lys-27'-, 'Lys-48'- and 'Lys-63'-linked polyubiquitination. This is Ubiquitin-conjugating enzyme E2 T (Ube2t) from Mus musculus (Mouse).